The primary structure comprises 254 residues: Ribonuclease HII (254 aa).

Positions Gln70–Glu254 constitute an RNase H type-2 domain. A divalent metal cation-binding residues include Asp76, Glu77, and Asp168.

The protein belongs to the RNase HII family. The cofactor is Mn(2+). Mg(2+) is required as a cofactor.

It localises to the cytoplasm. It carries out the reaction Endonucleolytic cleavage to 5'-phosphomonoester.. Functionally, endonuclease that specifically degrades the RNA of RNA-DNA hybrids. The chain is Ribonuclease HII from Streptococcus sanguinis (strain SK36).